The following is a 279-amino-acid chain: DegV domain-containing protein SA1258 (279 aa).

One can recognise a DegV domain in the interval 4 to 278 (QIIVTDSTSD…QGAIGLVVLK (275 aa)). Threonine 61 and serine 93 together coordinate hexadecanoate.

In terms of biological role, may bind long-chain fatty acids, such as palmitate, and may play a role in lipid transport or fatty acid metabolism. This is DegV domain-containing protein SA1258 from Staphylococcus aureus (strain N315).